We begin with the raw amino-acid sequence, 132 residues long: Ribonuclease P protein component 2 (132 aa).

Belongs to the eukaryotic/archaeal RNase P protein component 2 family. In terms of assembly, consists of a catalytic RNA component and at least 4-5 protein subunits.

It is found in the cytoplasm. The enzyme catalyses Endonucleolytic cleavage of RNA, removing 5'-extranucleotides from tRNA precursor.. Part of ribonuclease P, a protein complex that generates mature tRNA molecules by cleaving their 5'-ends. The chain is Ribonuclease P protein component 2 from Methanosarcina acetivorans (strain ATCC 35395 / DSM 2834 / JCM 12185 / C2A).